A 162-amino-acid polypeptide reads, in one-letter code: Crossover junction endodeoxyribonuclease RuvC (162 aa).

Active-site residues include Asp-8, Glu-69, and His-141. Positions 8, 69, and 141 each coordinate Mg(2+).

Belongs to the RuvC family. In terms of assembly, homodimer which binds Holliday junction (HJ) DNA. The HJ becomes 2-fold symmetrical on binding to RuvC with unstacked arms; it has a different conformation from HJ DNA in complex with RuvA. In the full resolvosome a probable DNA-RuvA(4)-RuvB(12)-RuvC(2) complex forms which resolves the HJ. The cofactor is Mg(2+).

The protein resides in the cytoplasm. It carries out the reaction Endonucleolytic cleavage at a junction such as a reciprocal single-stranded crossover between two homologous DNA duplexes (Holliday junction).. Functionally, the RuvA-RuvB-RuvC complex processes Holliday junction (HJ) DNA during genetic recombination and DNA repair. Endonuclease that resolves HJ intermediates. Cleaves cruciform DNA by making single-stranded nicks across the HJ at symmetrical positions within the homologous arms, yielding a 5'-phosphate and a 3'-hydroxyl group; requires a central core of homology in the junction. The consensus cleavage sequence is 5'-(A/T)TT(C/G)-3'. Cleavage occurs on the 3'-side of the TT dinucleotide at the point of strand exchange. HJ branch migration catalyzed by RuvA-RuvB allows RuvC to scan DNA until it finds its consensus sequence, where it cleaves and resolves the cruciform DNA. The protein is Crossover junction endodeoxyribonuclease RuvC of Wolbachia pipientis wMel.